The primary structure comprises 148 residues: Arginine repressor (148 aa).

Belongs to the ArgR family.

Its subcellular location is the cytoplasm. Its pathway is amino-acid biosynthesis; L-arginine biosynthesis [regulation]. In terms of biological role, regulates arginine biosynthesis genes. This chain is Arginine repressor, found in Chlorobium chlorochromatii (strain CaD3).